The following is a 104-amino-acid chain: Large ribosomal subunit protein uL23 (104 aa).

It belongs to the universal ribosomal protein uL23 family. As to quaternary structure, part of the 50S ribosomal subunit. Contacts protein L29, and trigger factor when it is bound to the ribosome.

One of the early assembly proteins it binds 23S rRNA. One of the proteins that surrounds the polypeptide exit tunnel on the outside of the ribosome. Forms the main docking site for trigger factor binding to the ribosome. This chain is Large ribosomal subunit protein uL23, found in Burkholderia multivorans (strain ATCC 17616 / 249).